A 313-amino-acid polypeptide reads, in one-letter code: Type II restriction enzyme BsuMI component YdiR (313 aa).

The tract at residues 289–313 (FVSGDIVDENATTSSDDLPEDFENN) is disordered.

As to quaternary structure, bsuMI restriction activity requires YdiR, YdiS and YdjA.

The enzyme catalyses Endonucleolytic cleavage of DNA to give specific double-stranded fragments with terminal 5'-phosphates.. A P subtype restriction enzyme that recognizes the double-stranded sequence 5'-CTCGAG-3'; the cleavage site is unknown. The chain is Type II restriction enzyme BsuMI component YdiR (ydiR) from Bacillus subtilis (strain 168).